The sequence spans 658 residues: UvrABC system protein B (658 aa).

Residues 25–178 form the Helicase ATP-binding domain; it reads KSLKNNNHYQ…KNFLLKLVEM (154 aa). 38–45 contacts ATP; it reads GVTGSGKT. Residues 91 to 114 carry the Beta-hairpin motif; the sequence is HFDYYQPESYIPRRDLFIEKDSSI. In terms of domain architecture, Helicase C-terminal spans 433-607; sequence QVQDLFDEIK…ELKLRDDEIR (175 aa). The 36-residue stretch at 623-658 folds into the UVR domain; the sequence is EKIIKELDKKMRECAKNLDFEEAMRLRDEIAKLRTL.

Belongs to the UvrB family. Forms a heterotetramer with UvrA during the search for lesions. Interacts with UvrC in an incision complex.

It localises to the cytoplasm. The UvrABC repair system catalyzes the recognition and processing of DNA lesions. A damage recognition complex composed of 2 UvrA and 2 UvrB subunits scans DNA for abnormalities. Upon binding of the UvrA(2)B(2) complex to a putative damaged site, the DNA wraps around one UvrB monomer. DNA wrap is dependent on ATP binding by UvrB and probably causes local melting of the DNA helix, facilitating insertion of UvrB beta-hairpin between the DNA strands. Then UvrB probes one DNA strand for the presence of a lesion. If a lesion is found the UvrA subunits dissociate and the UvrB-DNA preincision complex is formed. This complex is subsequently bound by UvrC and the second UvrB is released. If no lesion is found, the DNA wraps around the other UvrB subunit that will check the other stand for damage. This Helicobacter pylori (strain HPAG1) protein is UvrABC system protein B.